The following is a 310-amino-acid chain: Olfactory receptor 4C16 (310 aa).

The Extracellular portion of the chain corresponds to 1–23; the sequence is MQLNNNVTEFILLGLTQDPFWKK. N-linked (GlcNAc...) asparagine glycosylation is present at N6. A helical transmembrane segment spans residues 24–47; the sequence is IVFVIFLRLYLGTLLGNLLIIISV. Residues 48–55 lie on the Cytoplasmic side of the membrane; sequence KTSQALKN. Residues 56–77 form a helical membrane-spanning segment; sequence PMFFFLFYLSLSDTCLSTSITP. Over 78-98 the chain is Extracellular; sequence RMIVDALLKKTTISFSECMIQ. Cysteines 95 and 187 form a disulfide. The chain crosses the membrane as a helical span at residues 99–118; the sequence is VFSSHVFGCLEIFILILTAV. Topologically, residues 119–137 are cytoplasmic; the sequence is DRYVDICKPLHYMTIISQW. A helical membrane pass occupies residues 138 to 156; sequence VCGVLMAVAWVGSCVHSLV. Topologically, residues 157–193 are extracellular; sequence QIFLALSLPFCGPNVINHCFCDLQPLLKQACSETYVV. The helical transmembrane segment at 194–217 threads the bilayer; sequence NLLLVSNSGAICAVSYVMLIFSYV. Topologically, residues 218–233 are cytoplasmic; that stretch reads IFLHSLRNHSAEVIKK. Residues 234-256 traverse the membrane as a helical segment; that stretch reads ALSTCVSHIIVVILFFGPCIFMY. Topologically, residues 257–267 are extracellular; it reads TCLATVFPMDK. Residues 268–287 traverse the membrane as a helical segment; that stretch reads MIAVFYTVGTSFLNPVIYTL. Residues 288–310 lie on the Cytoplasmic side of the membrane; sequence KNTEVKSAMRKLWSKKLITDDKR.

Belongs to the G-protein coupled receptor 1 family.

Its subcellular location is the cell membrane. Functionally, odorant receptor. The sequence is that of Olfactory receptor 4C16 (OR4C16) from Homo sapiens (Human).